A 563-amino-acid chain; its full sequence is RUN and FYVE domain-containing protein 4 (563 aa).

One can recognise an RUN domain in the interval 33 to 166; the sequence is TETSAELHRL…VAFNLDLQRP (134 aa). 2 disordered regions span residues 176 to 327 and 375 to 397; these read SESR…TTEG and KKSSPTEKPQEWTGVTSGTMQED. 2 stretches are compositionally biased toward basic and acidic residues: residues 196–205 and 263–284; these read GFPEEVRCSR and ETEREGFQLDQKDGGPKPRKFL. Polar residues predominate over residues 285–295; it reads ENSTASIQQQR. A compositionally biased stretch (basic and acidic residues) spans 297-312; the sequence is RAKDVKMQLTGRKVEG. The segment covering 385–396 has biased composition (polar residues); sequence EWTGVTSGTMQE. A coiled-coil region spans residues 421 to 462; it reads QAQCQEQLRAQEAELQALQEQLSRCQKERALLQVKLEQKQQE. An FYVE-type zinc finger spans residues 428 to 558; that stretch reads LRAQEAELQA…RCCPTCAQQE (131 aa). 8 residues coordinate Zn(2+): Cys513, Cys516, Cys529, Cys532, Cys537, Cys540, Cys551, and Cys554.

As to quaternary structure, forms homodimers (via coiled coil domain). Forms a ternary complex with RAB7A and LAMP2; the interaction with RAB7A is mediated by RUFY4 (via RUN and coiled coil domains). Interacts with GTP-, but not GDP-bound ARL8A and ARL8B. Interacts with dynactin/DCTN1 and the dynein intermediate chain DYNC1I1/2. As to expression, expressed in dendritic cells.

The protein resides in the cytoplasmic vesicle. It localises to the autophagosome. The protein localises to the lysosome. In terms of biological role, ARL8 effector that promotes the coupling of endolysosomes to dynein-dynactin for retrograde transport along microtubules. Acts by binding both GTP-bound ARL8 and dynein-dynactin. In nonneuronal cells, promotes concentration of endolysosomes in the juxtanuclear area. In hippocampal neurons, drives retrograde transport of endolysosomes from the axon to the soma. Positive regulator of macroautophagy in dendritic cells. Increases autophagic flux, probably by stimulating both autophagosome formation and facilitating tethering with lysosomes. Binds to phosphatidylinositol 3-phosphate (PtdIns3P) through its FYVE-type zinc finger. Positive regulator of osteosclast bone-resorbing activity, possibly by promoting late endosome-lysosome fusion by acting as an adapter protein between RAB7A on late endosomes and LAMP2 on primary lysosomes. The protein is RUN and FYVE domain-containing protein 4 (Rufy4) of Mus musculus (Mouse).